A 301-amino-acid polypeptide reads, in one-letter code: WD repeat-containing protein SL1-17 (301 aa).

7 WD repeats span residues 11–54 (AHKE…LKCL), 59–98 (GHRLGVISVDINSTGTLAASSSLDSQILLWDLETGRLTKT), 101–140 (GDPADTWTIAFSPDSRFLATGSHTGCVNMINVQTAQKEGS), 143–182 (LEGKFVYXLAYISDGSKLAAGTINGLVSICDLETGSVQFL), 184–223 (GHATPVRSVSFSPDGRLLASASDDKQIKVFDVRDGRLVIP), 227–266 (GHKGWVVSVDFASDNRHLVTASTDCSVRIWDLASKEEKHC), and 269–300 (THEDQVWCARYSPQGNNIISVGDDRSIMIYQC).

In Schistosoma mansoni (Blood fluke), this protein is WD repeat-containing protein SL1-17.